Consider the following 480-residue polypeptide: Argininosuccinate lyase (480 aa).

This sequence belongs to the lyase 1 family. Argininosuccinate lyase subfamily.

Its subcellular location is the cytoplasm. The catalysed reaction is 2-(N(omega)-L-arginino)succinate = fumarate + L-arginine. It participates in amino-acid biosynthesis; L-arginine biosynthesis; L-arginine from L-ornithine and carbamoyl phosphate: step 3/3. The protein is Argininosuccinate lyase of Ruthia magnifica subsp. Calyptogena magnifica.